The following is a 521-amino-acid chain: MRKIMLIASAMSALSLPFSANAIEFDENSLECGPYAKVGIVGGVLSGVESARLDPADSEGKKHLPLIKGMPFGVTLAAGMTITPGVRAEISAMYLMNVKAEVELGKMGSDANTGTTADASAGVIRKHKKLTPPQPNIMPISIADRDIAVDIPNAAGQGNVDVRAAARIAWLKNYAGIDYYVPDSNNPQGRVVNPVLLNIPQGNPNPAGGGGRAAPAAFDILDHAQWRDVVVGITALSNANKPNVSAVKILSDKISQIYADIKPFANVASVQISETPLPDSASVDQIQNKVQELNKVLEDVRESFDGFILNAFAQPVRLNFQIPQVVQGQGQQPQAAATAQEAAAAAAIRALNDGENNGIIQLYKDLYKLQRNVALKKSMKQLGDELGVDQGQEGGCSKDKKQSDTTAEESKKEGKKGKEIEFDLHMAVGQVKLYADLFTIDSFSVYAGIGAGLAYTHGKIDGKDIKAHTGMVGSLALGVAANVADGVYMDVDAGYLYSFSKIEEKYQMNAFVASAGIRYNF.

Residues 1–22 (MRKIMLIASAMSALSLPFSANA) form the signal peptide. Residues 64-86 (LPLIKGMPFGVTLAAGMTITPGV) traverse the membrane as a helical segment. A disordered region spans residues 386–415 (LGVDQGQEGGCSKDKKQSDTTAEESKKEGK). Residues 396–415 (CSKDKKQSDTTAEESKKEGK) show a composition bias toward basic and acidic residues. The helical transmembrane segment at 469-484 (TGMVGSLALGVAANVA) threads the bilayer.

It is found in the cell membrane. Functionally, may be an adherent factor for rickettsial adsorption to the host-cell surface and a determinant of virulence of individual rickettsial strain. It is the major outer membrane protein. The chain is 56 kDa type-specific antigen from Orientia tsutsugamushi (Rickettsia tsutsugamushi).